The chain runs to 549 residues: Chaperonin GroEL 2 (549 aa).

ATP is bound by residues 29 to 32 (TLGP), Lys50, 86 to 90 (DGTTT), Gly414, 477 to 479 (NAA), and Asp493.

It belongs to the chaperonin (HSP60) family. Forms a cylinder of 14 subunits composed of two heptameric rings stacked back-to-back. Interacts with the co-chaperonin GroES.

It is found in the cytoplasm. It catalyses the reaction ATP + H2O + a folded polypeptide = ADP + phosphate + an unfolded polypeptide.. Its function is as follows. Together with its co-chaperonin GroES, plays an essential role in assisting protein folding. The GroEL-GroES system forms a nano-cage that allows encapsulation of the non-native substrate proteins and provides a physical environment optimized to promote and accelerate protein folding. The protein is Chaperonin GroEL 2 of Myxococcus xanthus (strain DK1622).